Reading from the N-terminus, the 356-residue chain is Golgi-resident adenosine 3',5'-bisphosphate 3'-phosphatase (356 aa).

Methionine 1 is subject to N-acetylmethionine. Over 1-12 (MAPMGIRLSPLG) the chain is Cytoplasmic. Residues 13-33 (VAVFFLLGLGVLYHLYSGFLA) traverse the membrane as a helical segment. The Lumenal portion of the chain corresponds to 34–356 (GRFSLFGLGG…KLPDLEKSGH (323 aa)). Residues 82–104 (VRESNVLHEKSKGKTREGAEDKM) form a disordered region. The active-site Proton acceptor is the aspartate 108. The Mg(2+) site is built by glutamate 131, aspartate 172, leucine 174, and aspartate 175. Residue threonine 177 is the Proton acceptor of the active site. 2 residues coordinate AMP: serine 240 and histidine 243. The N-linked (GlcNAc...) asparagine glycan is linked to asparagine 257. 2 residues coordinate AMP: glycine 266 and lysine 270. Aspartate 298 provides a ligand contact to Mg(2+).

The protein belongs to the inositol monophosphatase superfamily. Mg(2+) is required as a cofactor. Post-translationally, contains N-linked glycan resistant to endoglycosydase H.

Its subcellular location is the golgi apparatus. It is found in the trans-Golgi network membrane. The catalysed reaction is adenosine 3',5'-bisphosphate + H2O = AMP + phosphate. Its pathway is sulfur metabolism. With respect to regulation, strongly inhibited by lithium. In terms of biological role, exhibits 3'-nucleotidase activity toward adenosine 3',5'-bisphosphate (PAP), namely hydrolyzes adenosine 3',5'-bisphosphate into adenosine 5'-monophosphate (AMP) and a phosphate. May play a role in the formation of skeletal elements derived through endochondral ossification, possibly by clearing adenosine 3',5'-bisphosphate produced by Golgi sulfotransferases during glycosaminoglycan sulfation. Has no activity toward 3'-phosphoadenosine 5'-phosphosulfate (PAPS) or inositol phosphate (IP) substrates including I(1)P, I(1,4)P2, I(1,3,4)P3, I(1,4,5)P3 and I(1,3,4,5)P4. The sequence is that of Golgi-resident adenosine 3',5'-bisphosphate 3'-phosphatase (Bpnt2) from Rattus norvegicus (Rat).